The chain runs to 188 residues: Ribosome maturation factor RimP (188 aa).

It belongs to the RimP family.

Its subcellular location is the cytoplasm. Functionally, required for maturation of 30S ribosomal subunits. The polypeptide is Ribosome maturation factor RimP (Corynebacterium aurimucosum (strain ATCC 700975 / DSM 44827 / CIP 107346 / CN-1) (Corynebacterium nigricans)).